Here is a 272-residue protein sequence, read N- to C-terminus: Indole-3-glycerol phosphate synthase (272 aa).

The protein belongs to the TrpC family.

The enzyme catalyses 1-(2-carboxyphenylamino)-1-deoxy-D-ribulose 5-phosphate + H(+) = (1S,2R)-1-C-(indol-3-yl)glycerol 3-phosphate + CO2 + H2O. Its pathway is amino-acid biosynthesis; L-tryptophan biosynthesis; L-tryptophan from chorismate: step 4/5. This is Indole-3-glycerol phosphate synthase from Mycolicibacterium smegmatis (strain ATCC 700084 / mc(2)155) (Mycobacterium smegmatis).